We begin with the raw amino-acid sequence, 335 residues long: MSKKCAREDCGKTVYPVEELKCLDKVWHKQCFKCTVCGMTLNMKNYKGYDKRPYCDPHYPKTVASVMADTPEMRRIAENTKNQSNIKYHAEYEKMKGTKIEIADDPEMERLKKNTQVQSNVSYHGVLDQKARQEEVRPKEEISPNPTPTPISPMNHQSYSAPTQAVAANTHLIYSTEQGGAVSPTPQKSIGSIADYDPMNGQWGTAAAQPRNSEKLGYLKAQVDKGPARFCADFAGAPPPSSNSISSTSPHSTLSSPQSTISPTGKAGFAVKAIYDYAAADKDEISFLEGDIIVNCEKIDDGWMTGTVQRTLQWGMLPANYVQPHKLPTGLHRLS.

The LIM zinc-binding domain maps to 5–65; that stretch reads CAREDCGKTV…DPHYPKTVAS (61 aa). Nebulin repeat units lie at residues 66 to 97 and 98 to 132; these read VMAD…KMKG and TKIE…QKAR. Basic and acidic residues predominate over residues 128–142; that stretch reads DQKARQEEVRPKEEI. Disordered stretches follow at residues 128-151 and 233-264; these read DQKA…PTPI and DFAG…ISPT. Residues 242-260 show a composition bias toward low complexity; sequence SNSISSTSPHSTLSSPQST. Residues 266-327 enclose the SH3 domain; the sequence is KAGFAVKAIY…PANYVQPHKL (62 aa).

The sequence is that of LIM and SH3 domain protein F42H10.3 from Caenorhabditis elegans.